The sequence spans 268 residues: Nickel import ATP-binding protein NikE (268 aa).

Positions 4-252 (LNVSGLSHHY…SSDAGRVLQN (249 aa)) constitute an ABC transporter domain. Residue 45–52 (GRSGCGKS) coordinates ATP.

This sequence belongs to the ABC transporter superfamily. Nickel importer (TC 3.A.1.5.3) family. The complex is composed of two ATP-binding proteins (NikD and NikE), two transmembrane proteins (NikB and NikC) and a solute-binding protein (NikA).

The protein resides in the cell inner membrane. The enzyme catalyses Ni(2+)(out) + ATP + H2O = Ni(2+)(in) + ADP + phosphate + H(+). Functionally, part of the ABC transporter complex NikABCDE involved in nickel import. Responsible for energy coupling to the transport system. In Shigella boydii serotype 4 (strain Sb227), this protein is Nickel import ATP-binding protein NikE.